Here is a 180-residue protein sequence, read N- to C-terminus: ATP-dependent Clp protease proteolytic subunit 2 (180 aa).

Ser86 functions as the Nucleophile in the catalytic mechanism. His111 is an active-site residue.

It belongs to the peptidase S14 family. As to quaternary structure, fourteen ClpP subunits assemble into 2 heptameric rings which stack back to back to give a disk-like structure with a central cavity, resembling the structure of eukaryotic proteasomes.

It localises to the cytoplasm. It carries out the reaction Hydrolysis of proteins to small peptides in the presence of ATP and magnesium. alpha-casein is the usual test substrate. In the absence of ATP, only oligopeptides shorter than five residues are hydrolyzed (such as succinyl-Leu-Tyr-|-NHMec, and Leu-Tyr-Leu-|-Tyr-Trp, in which cleavage of the -Tyr-|-Leu- and -Tyr-|-Trp bonds also occurs).. Its function is as follows. Cleaves peptides in various proteins in a process that requires ATP hydrolysis. Has a chymotrypsin-like activity. Plays a major role in the degradation of misfolded proteins. This Tropheryma whipplei (strain Twist) (Whipple's bacillus) protein is ATP-dependent Clp protease proteolytic subunit 2.